The sequence spans 82 residues: Photosystem I iron-sulfur center (82 aa).

4Fe-4S ferredoxin-type domains follow at residues 2 to 31 (AHTV…MVPW) and 40 to 69 (IAAA…IRVY). [4Fe-4S] cluster is bound by residues Cys11, Cys14, Cys17, Cys21, Cys49, Cys52, Cys55, and Cys59.

The cyanobacterial PSI reaction center is composed of one copy each of PsaA,B,C,D,E,F,I,J,K,L,M and X, and forms trimeric complexes. [4Fe-4S] cluster serves as cofactor.

It localises to the cellular thylakoid membrane. It carries out the reaction reduced [plastocyanin] + hnu + oxidized [2Fe-2S]-[ferredoxin] = oxidized [plastocyanin] + reduced [2Fe-2S]-[ferredoxin]. Its function is as follows. Apoprotein for the two 4Fe-4S centers FA and FB of photosystem I (PSI); essential for photochemical activity. FB is the terminal electron acceptor of PSI, donating electrons to ferredoxin. The C-terminus interacts with PsaA/B/D and helps assemble the protein into the PSI complex. Required for binding of PsaD and PsaE to PSI. PSI is a plastocyanin/cytochrome c6-ferredoxin oxidoreductase, converting photonic excitation into a charge separation, which transfers an electron from the donor P700 chlorophyll pair to the spectroscopically characterized acceptors A0, A1, FX, FA and FB in turn. The chain is Photosystem I iron-sulfur center from Synechococcus sp. (strain JA-3-3Ab) (Cyanobacteria bacterium Yellowstone A-Prime).